Consider the following 426-residue polypeptide: Chaperone SurA (426 aa).

Residues 1 to 13 (MLGALFLSTAASA) form the signal peptide. 2 consecutive PpiC domains span residues 164 to 265 (SEEL…KLLD) and 274 to 373 (RDEV…EVLG).

The protein localises to the periplasm. The enzyme catalyses [protein]-peptidylproline (omega=180) = [protein]-peptidylproline (omega=0). Its function is as follows. Chaperone involved in the correct folding and assembly of outer membrane proteins. Recognizes specific patterns of aromatic residues and the orientation of their side chains, which are found more frequently in integral outer membrane proteins. May act in both early periplasmic and late outer membrane-associated steps of protein maturation. The polypeptide is Chaperone SurA (Pseudomonas fluorescens (strain ATCC BAA-477 / NRRL B-23932 / Pf-5)).